The primary structure comprises 179 residues: Large ribosomal subunit protein uL5 (179 aa).

This sequence belongs to the universal ribosomal protein uL5 family. As to quaternary structure, part of the 50S ribosomal subunit; part of the 5S rRNA/L5/L18/L25 subcomplex. Contacts the 5S rRNA and the P site tRNA. Forms a bridge to the 30S subunit in the 70S ribosome.

Its function is as follows. This is one of the proteins that bind and probably mediate the attachment of the 5S RNA into the large ribosomal subunit, where it forms part of the central protuberance. In the 70S ribosome it contacts protein S13 of the 30S subunit (bridge B1b), connecting the 2 subunits; this bridge is implicated in subunit movement. Contacts the P site tRNA; the 5S rRNA and some of its associated proteins might help stabilize positioning of ribosome-bound tRNAs. The protein is Large ribosomal subunit protein uL5 of Prochlorococcus marinus (strain MIT 9303).